A 584-amino-acid polypeptide reads, in one-letter code: DNA ligase (584 aa).

Glu-249 serves as a coordination point for ATP. Lys-251 functions as the N6-AMP-lysine intermediate in the catalytic mechanism. Positions 256, 271, 301, 341, 416, and 422 each coordinate ATP.

This sequence belongs to the ATP-dependent DNA ligase family. Mg(2+) serves as cofactor.

It carries out the reaction ATP + (deoxyribonucleotide)n-3'-hydroxyl + 5'-phospho-(deoxyribonucleotide)m = (deoxyribonucleotide)n+m + AMP + diphosphate.. Functionally, DNA ligase that seals nicks in double-stranded DNA during DNA replication, DNA recombination and DNA repair. The protein is DNA ligase of Pyrobaculum islandicum (strain DSM 4184 / JCM 9189 / GEO3).